The following is an 87-amino-acid chain: U3-theraphotoxin-Hhn1g (87 aa).

Residues 1-24 form the signal peptide; that stretch reads MVNMKASMFLTFAGLVLLFVVCFA. A propeptide spanning residues 25–52 is cleaved from the precursor; the sequence is SESEEKEFPKEMLSSIFAVDNDFKQEER. Intrachain disulfides connect cysteine 54/cysteine 67, cysteine 61/cysteine 72, and cysteine 66/cysteine 79.

This sequence belongs to the neurotoxin 10 (Hwtx-1) family. 51 (Hntx-8) subfamily. Hntx-8 sub-subfamily. As to expression, expressed by the venom gland.

It is found in the secreted. Functionally, ion channel inhibitor. In Cyriopagopus hainanus (Chinese bird spider), this protein is U3-theraphotoxin-Hhn1g.